A 255-amino-acid polypeptide reads, in one-letter code: Ribonuclease HII (255 aa).

An RNase H type-2 domain is found at 72 to 255 (QYIAGIDEAG…RSFAPVKAHE (184 aa)). A divalent metal cation contacts are provided by Asp78, Glu79, and Asp170.

This sequence belongs to the RNase HII family. Mn(2+) serves as cofactor. Mg(2+) is required as a cofactor.

It localises to the cytoplasm. It catalyses the reaction Endonucleolytic cleavage to 5'-phosphomonoester.. In terms of biological role, endonuclease that specifically degrades the RNA of RNA-DNA hybrids. In Bacillus licheniformis (strain ATCC 14580 / DSM 13 / JCM 2505 / CCUG 7422 / NBRC 12200 / NCIMB 9375 / NCTC 10341 / NRRL NRS-1264 / Gibson 46), this protein is Ribonuclease HII.